We begin with the raw amino-acid sequence, 407 residues long: Accessory Sec system protein translocase subunit SecY2 (407 aa).

Transmembrane regions (helical) follow at residues 13-33 (FLWT…TLPF), 65-85 (LFSV…MFAV), 104-124 (MLLT…NLPL), 133-153 (TTIM…LIWL), 158-178 (AAMG…AYIP), 190-210 (ISSL…YLAV), 248-268 (IMYA…IHFL), 287-307 (PAWF…FAFI), 345-365 (FALV…MVVL), and 370-390 (YLRL…VFSI).

This sequence belongs to the SecY/SEC61-alpha family. SecY2 subfamily. Component of the accessory SecA2/SecY2 protein translocase complex required to export cell wall proteins. May form heterotrimers with SecE and SecG subunits.

The protein resides in the cell membrane. In terms of biological role, part of the accessory SecA2/SecY2 system specifically required for export of possible cell wall proteins. The central subunit of a protein translocation channel. The sequence is that of Accessory Sec system protein translocase subunit SecY2 from Streptococcus sanguinis (strain SK36).